Reading from the N-terminus, the 156-residue chain is Small ribosomal subunit protein uS7 (156 aa).

The protein belongs to the universal ribosomal protein uS7 family. In terms of assembly, part of the 30S ribosomal subunit. Contacts proteins S9 and S11.

Its function is as follows. One of the primary rRNA binding proteins, it binds directly to 16S rRNA where it nucleates assembly of the head domain of the 30S subunit. Is located at the subunit interface close to the decoding center, probably blocks exit of the E-site tRNA. This chain is Small ribosomal subunit protein uS7, found in Clostridium acetobutylicum (strain ATCC 824 / DSM 792 / JCM 1419 / IAM 19013 / LMG 5710 / NBRC 13948 / NRRL B-527 / VKM B-1787 / 2291 / W).